Here is an 817-residue protein sequence, read N- to C-terminus: ABC transporter G family member STR (817 aa).

The segment at 1–30 is disordered; sequence MARLERDGTNKSLESLMDSHKPGGTTTNLN. Topologically, residues 1–542 are cytoplasmic; it reads MARLERDGTN…RTVLNVIRTP (542 aa). In terms of domain architecture, ABC transporter spans 43–294; sequence LEFTNLSYSI…LSGFGRPVPD (252 aa). 87 to 94 lines the ATP pocket; sequence GPSGAGKS. Disordered stretches follow at residues 321–349, 362–395, and 439–463; these read QYQHDGHKPDPAAMTPVPKPPRTPYRRNT, GFTAGTPQPDSSQFGLDDDDNDDDENFDNSLERR, and RPPSWTPARTPGWTPGKTPLSGPRS. Residues 362–375 show a composition bias toward polar residues; that stretch reads GFTAGTPQPDSSQF. Acidic residues predominate over residues 377 to 388; that stretch reads LDDDDNDDDENF. A helical transmembrane segment spans residues 543–563; it reads ELFASREIVLTVMALVLSTIF. Over 564–579 the chain is Extracellular; that stretch reads KNLGDTTFIDINRLLN. The chain crosses the membrane as a helical span at residues 580-600; sequence FYIFAVCLVFFSSNDAVPSFI. Residues 601–621 lie on the Cytoplasmic side of the membrane; sequence MERFIFIRETSHNAYRASSYV. Residues 622 to 642 form a helical membrane-spanning segment; the sequence is ISSLIVYLPFFAVQGLTFAVI. The Extracellular portion of the chain corresponds to 643 to 657; it reads TKLMLHLKSNLFNFW. A helical membrane pass occupies residues 658–678; the sequence is MILFASLITTNAYVMLVSALV. The Cytoplasmic segment spans residues 679–681; that stretch reads PSY. Residues 682–702 form a helical membrane-spanning segment; that stretch reads ITGYAVVIATTALFFLTCGFF. At 703 to 787 the chain is on the extracellular side; it reads LKRTQIPAYW…TMDITMESLW (85 aa). Asparagine 762 is a glycosylation site (N-linked (GlcNAc...) asparagine). Residues 788-808 traverse the membrane as a helical segment; that stretch reads YDILILLAWGVLYRFFFYLVL. Residues 809-817 lie on the Cytoplasmic side of the membrane; sequence RFYSKNERK.

This sequence belongs to the ABC transporter superfamily. ABCG family. Stunted arbuscule (STR) subfamily. In terms of assembly, heterodimerizes with STR2; the resulting transporter is located in the peri-arbuscular membrane. Expressed constitutively in the vascular tissue of roots.

It is found in the cell membrane. In terms of biological role, together with STR2, required for arbuscule development in arbuscular mycorrhizal (AM) symbiosis. This is ABC transporter G family member STR from Medicago truncatula (Barrel medic).